Reading from the N-terminus, the 120-residue chain is UPF0295 protein Aflv_0370 (120 aa).

The next 2 helical transmembrane spans lie at 12–32 and 42–62; these read IRTF…GGIF and LFMI…FWIG.

Belongs to the UPF0295 family.

The protein resides in the cell membrane. This Anoxybacillus flavithermus (strain DSM 21510 / WK1) protein is UPF0295 protein Aflv_0370.